A 336-amino-acid polypeptide reads, in one-letter code: F-box protein PP2-B1 (336 aa).

Positions 1–22 are disordered; it reads MEQIHGGDSNSGGGGGGSSRND. Gly residues predominate over residues 9–18; the sequence is SNSGGGGGGS. In terms of domain architecture, F-box spans 29–75; that stretch reads ASRFDALPEDCISKVISHTSPRDACVVASVSKSVKSAAQSDLVWEMF.

As to quaternary structure, part of a SCF (ASK-cullin-F-box) protein ligase complex. Interacts with SKP1A/ASK1 and SPK1B/ASK2.

The protein localises to the nucleus. The protein operates within protein modification; protein ubiquitination. Functionally, component of SCF(ASK-cullin-F-box) E3 ubiquitin ligase complexes, which may mediate the ubiquitination and subsequent proteasomal degradation of target proteins. In Arabidopsis thaliana (Mouse-ear cress), this protein is F-box protein PP2-B1 (PP2B1).